We begin with the raw amino-acid sequence, 649 residues long: WEB family protein At5g55860 (649 aa).

3 coiled-coil regions span residues 59–227 (EKVL…ACSQ), 267–356 (EFAK…IESV), and 391–461 (TINQ…MSEK). Basic and acidic residues predominate over residues 443-453 (EAKAAETKALE). The segment at 443–483 (EAKAAETKALEQIKSMSEKTNAARNSTSSESGSQSITLSQE) is disordered. Polar residues predominate over residues 456–467 (KSMSEKTNAARN). A compositionally biased stretch (low complexity) spans 468 to 482 (STSSESGSQSITLSQ). A coiled-coil region spans residues 505-549 (AALAQVEAVRASENETLKKLETTQEEIKKLKTATEEALKKAAMAD). A disordered region spans residues 583 to 611 (MKMASESSPQQHYKAPKQKPVNNKLEKTK).

It belongs to the WEB family.

In Arabidopsis thaliana (Mouse-ear cress), this protein is WEB family protein At5g55860.